The chain runs to 657 residues: Acetyl-coenzyme A synthetase (657 aa).

CoA contacts are provided by residues 192 to 195 (RRGK) and threonine 311. ATP contacts are provided by residues 387–389 (GEP), 411–416 (DTWWQT), aspartate 504, arginine 519, and arginine 530. Mg(2+) is bound by residues histidine 543 and valine 546. Arginine 592 contacts CoA. An N6-acetyllysine modification is found at lysine 617.

The protein belongs to the ATP-dependent AMP-binding enzyme family. It depends on Mg(2+) as a cofactor. In terms of processing, acetylated. Deacetylation by the SIR2-homolog deacetylase activates the enzyme.

The enzyme catalyses acetate + ATP + CoA = acetyl-CoA + AMP + diphosphate. Catalyzes the conversion of acetate into acetyl-CoA (AcCoA), an essential intermediate at the junction of anabolic and catabolic pathways. AcsA undergoes a two-step reaction. In the first half reaction, AcsA combines acetate with ATP to form acetyl-adenylate (AcAMP) intermediate. In the second half reaction, it can then transfer the acetyl group from AcAMP to the sulfhydryl group of CoA, forming the product AcCoA. The sequence is that of Acetyl-coenzyme A synthetase from Campylobacter jejuni subsp. jejuni serotype O:2 (strain ATCC 700819 / NCTC 11168).